Consider the following 228-residue polypeptide: Ribose-5-phosphate isomerase A (228 aa).

Residues 32 to 35, 85 to 88, and 98 to 101 contribute to the substrate site; these read TGST, DGAD, and KGGG. Glutamate 107 serves as the catalytic Proton acceptor. Lysine 125 lines the substrate pocket.

The protein belongs to the ribose 5-phosphate isomerase family. As to quaternary structure, homodimer.

It carries out the reaction aldehydo-D-ribose 5-phosphate = D-ribulose 5-phosphate. It functions in the pathway carbohydrate degradation; pentose phosphate pathway; D-ribose 5-phosphate from D-ribulose 5-phosphate (non-oxidative stage): step 1/1. Its function is as follows. Catalyzes the reversible conversion of ribose-5-phosphate to ribulose 5-phosphate. The sequence is that of Ribose-5-phosphate isomerase A from Cupriavidus necator (strain ATCC 17699 / DSM 428 / KCTC 22496 / NCIMB 10442 / H16 / Stanier 337) (Ralstonia eutropha).